The chain runs to 290 residues: UPF0761 membrane protein YihY (290 aa).

Transmembrane regions (helical) follow at residues 44–64 (LLSL…FPMF), 104–124 (VGAC…DSAL), 140–160 (FAVY…SLAI), 183–203 (IFPL…VPTI), 210–230 (AIVG…GFAL), and 244–264 (VLAV…IVLL).

It belongs to the UPF0761 family.

The protein resides in the cell inner membrane. The sequence is that of UPF0761 membrane protein YihY from Shigella boydii serotype 4 (strain Sb227).